The primary structure comprises 468 residues: Argininosuccinate lyase (468 aa).

Residues Ser33, Asn121, and Thr166 each coordinate 2-(N(omega)-L-arginino)succinate. The Proton acceptor role is filled by His167. Residue Ser288 is the Proton donor of the active site. 4 residues coordinate 2-(N(omega)-L-arginino)succinate: Asn296, Tyr328, Gln333, and Lys336.

The protein belongs to the lyase 1 family. Argininosuccinate lyase subfamily. Homotetramer.

The enzyme catalyses 2-(N(omega)-L-arginino)succinate = fumarate + L-arginine. It participates in amino-acid biosynthesis; L-arginine biosynthesis; L-arginine from L-ornithine and carbamoyl phosphate: step 3/3. In Candida albicans (Yeast), this protein is Argininosuccinate lyase (ARG4).